The following is a 548-amino-acid chain: Peptidyl-prolyl isomerase CWC27 (548 aa).

The 183-residue stretch at 11–193 (PTASVIIHTT…YPVKIERIEI (183 aa)) folds into the PPIase cyclophilin-type domain. Disordered regions lie at residues 204 to 436 (RSRV…GDEE) and 504 to 548 (TLKD…RGAK). Basic and acidic residues-rich tracts occupy residues 328 to 340 (EAPR…RANE), 353 to 366 (IHSE…KKSA), 406 to 428 (RLEK…KDGE), and 504 to 516 (TLKD…RDAR).

The protein belongs to the cyclophilin-type PPIase family. CWC27 subfamily. In terms of assembly, associated with the spliceosome.

Its subcellular location is the cytoplasm. The protein resides in the nucleus. The enzyme catalyses [protein]-peptidylproline (omega=180) = [protein]-peptidylproline (omega=0). In terms of biological role, PPIases accelerate the folding of proteins. It catalyzes the cis-trans isomerization of proline imidic peptide bonds in oligopeptides. Involved in pre-mRNA splicing. The polypeptide is Peptidyl-prolyl isomerase CWC27 (CWC27) (Gibberella zeae (strain ATCC MYA-4620 / CBS 123657 / FGSC 9075 / NRRL 31084 / PH-1) (Wheat head blight fungus)).